Here is a 635-residue protein sequence, read N- to C-terminus: Probable extracellular metalloproteinase 1 (635 aa).

The N-terminal stretch at 1–19 is a signal peptide; that stretch reads MHGLLLAAGLLSLPLHVLA. A propeptide spanning residues 20–246 is cleaved from the precursor; that stretch reads HPQPSTSTSL…VHNVVDYVAH (227 aa). Asn287 is a glycosylation site (N-linked (GlcNAc...) asparagine). His430 provides a ligand contact to Zn(2+). Residue Glu431 is part of the active site. His434 contacts Zn(2+). 3 N-linked (GlcNAc...) asparagine glycosylation sites follow: Asn475, Asn594, and Asn623.

It belongs to the peptidase M36 family. Zn(2+) is required as a cofactor.

It localises to the secreted. Functionally, secreted metalloproteinase probably acting as a virulence factor. This chain is Probable extracellular metalloproteinase 1 (MEP1), found in Arthroderma benhamiae (strain ATCC MYA-4681 / CBS 112371) (Trichophyton mentagrophytes).